The primary structure comprises 361 residues: MKTPHILMMAAGTGGHVFPALAVSEELTKRGAMIHWLGTPNGMENGLVAPTGYPFHAIEMQGLRGKGIGRLLKMPVTLLSATMAVIKIIRGNNIDIVVGFGGYVSAPGGIAARLTKTPLIIHEQNAIAGMSNRYLAKMATKVLQAFENTFGNSQLDAKLETVGNPVRNAITGVAEPIARYDINDCSALKLLVVGGSLGAQVLNETVPKALALIESPFEVRHQCGRNNEAATQAAYDEQDLSMHKFTVQPFIDDMAAAYNWADIIVCRAGALTVTEIQNVGIAAIFVPLPSAVDDHQTANARTLTLHKAAILLPQNELTPKRLSEELAALDRPACLEMAKKGHALANRQACQHVANIIWQAL.

UDP-N-acetyl-alpha-D-glucosamine contacts are provided by residues 13 to 15 (TGG), Asn-125, Arg-167, Ser-196, Ile-251, 270 to 275 (ALTVTE), and Gln-296.

The protein belongs to the glycosyltransferase 28 family. MurG subfamily.

The protein resides in the cell inner membrane. The enzyme catalyses di-trans,octa-cis-undecaprenyl diphospho-N-acetyl-alpha-D-muramoyl-L-alanyl-D-glutamyl-meso-2,6-diaminopimeloyl-D-alanyl-D-alanine + UDP-N-acetyl-alpha-D-glucosamine = di-trans,octa-cis-undecaprenyl diphospho-[N-acetyl-alpha-D-glucosaminyl-(1-&gt;4)]-N-acetyl-alpha-D-muramoyl-L-alanyl-D-glutamyl-meso-2,6-diaminopimeloyl-D-alanyl-D-alanine + UDP + H(+). It functions in the pathway cell wall biogenesis; peptidoglycan biosynthesis. Its function is as follows. Cell wall formation. Catalyzes the transfer of a GlcNAc subunit on undecaprenyl-pyrophosphoryl-MurNAc-pentapeptide (lipid intermediate I) to form undecaprenyl-pyrophosphoryl-MurNAc-(pentapeptide)GlcNAc (lipid intermediate II). The polypeptide is UDP-N-acetylglucosamine--N-acetylmuramyl-(pentapeptide) pyrophosphoryl-undecaprenol N-acetylglucosamine transferase (Psychrobacter cryohalolentis (strain ATCC BAA-1226 / DSM 17306 / VKM B-2378 / K5)).